The primary structure comprises 255 residues: Glioma pathogenesis-related protein 1 (255 aa).

The first 17 residues, 1–17 (MQVILAVIVWMASSVSS), serve as a signal peptide directing secretion. Positions 39 to 164 (QVHNQLRSKV…PNGANFICDY (126 aa)) constitute an SCP domain. Residues 224–244 (SLFLIAKSVLLLLSVIITIWV) traverse the membrane as a helical segment.

This sequence belongs to the CRISP family.

It localises to the membrane. The polypeptide is Glioma pathogenesis-related protein 1 (Glipr1) (Mus musculus (Mouse)).